The chain runs to 3187 residues: Cilia- and flagella-associated protein 47 (3187 aa).

Residues 1746–1869 (SDSERILLSW…LCVYMYERLP (124 aa)) form the Calponin-homology (CH) domain. Residues 2024-2052 (KLTESRQYPKHDDDMSSSGSDTDQGCSDS) are disordered. The segment covering 2026-2037 (TESRQYPKHDDD) has biased composition (basic and acidic residues).

In terms of assembly, interacts with CFAP65. Highly expressed in spermatzoa (at protein level).

It is found in the cytoplasm. Its subcellular location is the cytoskeleton. The protein resides in the flagellum basal body. Functionally, plays a role in flagellar formation and sperm motility. In Homo sapiens (Human), this protein is Cilia- and flagella-associated protein 47.